Consider the following 305-residue polypeptide: Protoheme IX farnesyltransferase (305 aa).

9 consecutive transmembrane segments (helical) span residues 28–48 (IIEL…QGVP), 52–72 (LVLL…ALNM), 101–121 (LAFG…TVNW), 122–142 (LSAW…TMIL), 149–169 (NIVW…SSVT), 174–194 (WAPV…YWPL), 218–238 (VVAR…LLLT), 240–260 (LGYT…FWLW), and 283–303 (LFHW…VDPF).

Belongs to the UbiA prenyltransferase family. Protoheme IX farnesyltransferase subfamily.

The protein localises to the cell membrane. It catalyses the reaction heme b + (2E,6E)-farnesyl diphosphate + H2O = Fe(II)-heme o + diphosphate. It participates in porphyrin-containing compound metabolism; heme O biosynthesis; heme O from protoheme: step 1/1. Its function is as follows. Converts heme B (protoheme IX) to heme O by substitution of the vinyl group on carbon 2 of heme B porphyrin ring with a hydroxyethyl farnesyl side group. The chain is Protoheme IX farnesyltransferase from Streptomyces avermitilis (strain ATCC 31267 / DSM 46492 / JCM 5070 / NBRC 14893 / NCIMB 12804 / NRRL 8165 / MA-4680).